Reading from the N-terminus, the 301-residue chain is GTPase Era (301 aa).

Residues tyrosine 7–glutamate 175 enclose the Era-type G domain. Positions glycine 15–serine 22 are G1. Position 15–22 (glycine 15–serine 22) interacts with GTP. The tract at residues glutamine 41–histidine 45 is G2. Positions aspartate 62–glycine 65 are G3. GTP contacts are provided by residues aspartate 62–leucine 66 and asparagine 124–aspartate 127. The G4 stretch occupies residues asparagine 124 to aspartate 127. Residues isoleucine 154–alanine 156 form a G5 region. Residues leucine 206–serine 283 form the KH type-2 domain.

This sequence belongs to the TRAFAC class TrmE-Era-EngA-EngB-Septin-like GTPase superfamily. Era GTPase family. As to quaternary structure, monomer.

The protein resides in the cytoplasm. Its subcellular location is the cell inner membrane. An essential GTPase that binds both GDP and GTP, with rapid nucleotide exchange. Plays a role in 16S rRNA processing and 30S ribosomal subunit biogenesis and possibly also in cell cycle regulation and energy metabolism. This Salmonella agona (strain SL483) protein is GTPase Era.